We begin with the raw amino-acid sequence, 122 residues long: MIQTESRLEVADNTGAKSVLCIKVLGGSKRRYASVGDIIKVSVKEAAPRGRVKKGEIYSAVVVRTAKGIRRGDGSLVKFDGNAAVLLNAKLEPIGTRIFGPVTRELRTEKFMKIVSLAPEVL.

The protein belongs to the universal ribosomal protein uL14 family. Part of the 50S ribosomal subunit. Forms a cluster with proteins L3 and L19. In the 70S ribosome, L14 and L19 interact and together make contacts with the 16S rRNA in bridges B5 and B8.

Binds to 23S rRNA. Forms part of two intersubunit bridges in the 70S ribosome. In Verminephrobacter eiseniae (strain EF01-2), this protein is Large ribosomal subunit protein uL14.